The sequence spans 344 residues: Dihydroorotate dehydrogenase (quinone) (344 aa).

FMN-binding positions include 61–65 (AGLDK) and Thr-85. Lys-65 lines the substrate pocket. 110 to 114 (NRMGF) serves as a coordination point for substrate. The FMN site is built by Asn-138 and Asn-171. Asn-171 contributes to the substrate binding site. The active-site Nucleophile is the Ser-174. Substrate is bound at residue Asn-176. The FMN site is built by Lys-216 and Thr-244. Residue 245-246 (NT) coordinates substrate. Residues Gly-267, Gly-296, and 317 to 318 (YS) each bind FMN.

The protein belongs to the dihydroorotate dehydrogenase family. Type 2 subfamily. Monomer. The cofactor is FMN.

The protein localises to the cell membrane. It carries out the reaction (S)-dihydroorotate + a quinone = orotate + a quinol. It participates in pyrimidine metabolism; UMP biosynthesis via de novo pathway; orotate from (S)-dihydroorotate (quinone route): step 1/1. Its function is as follows. Catalyzes the conversion of dihydroorotate to orotate with quinone as electron acceptor. The polypeptide is Dihydroorotate dehydrogenase (quinone) (Psychrobacter arcticus (strain DSM 17307 / VKM B-2377 / 273-4)).